The following is a 151-amino-acid chain: UPF0178 protein YaiI (151 aa).

It belongs to the UPF0178 family.

The chain is UPF0178 protein YaiI from Salmonella choleraesuis (strain SC-B67).